The chain runs to 96 residues: U-stichotoxin-Hau2b (96 aa).

An N-terminal signal peptide occupies residues 1–18 (MKPIFIVALLFSTCLVNA). Propeptides lie at residues 19 to 29 (KPSIDDAEMKR) and 30 to 33 (EPKP). 2 cysteine pairs are disulfide-bonded: Cys-40–Cys-51 and Cys-43–Cys-58. 2 propeptides span residues 62 to 64 (RKR) and 65 to 68 (EPKP). Cystine bridges form between Cys-75-Cys-86 and Cys-78-Cys-93.

Belongs to the sea anemone BBH family.

The protein resides in the secreted. It localises to the nematocyst. Its function is as follows. Neurotoxin that paralyzes freshwater crabs at high concentration. The polypeptide is U-stichotoxin-Hau2b (Heteractis aurora (Banded sea anemone)).